A 142-amino-acid chain; its full sequence is Large ribosomal subunit protein uL11 (142 aa).

It belongs to the universal ribosomal protein uL11 family. As to quaternary structure, part of the ribosomal stalk of the 50S ribosomal subunit. Interacts with L10 and the large rRNA to form the base of the stalk. L10 forms an elongated spine to which L12 dimers bind in a sequential fashion forming a multimeric L10(L12)X complex. In terms of processing, one or more lysine residues are methylated.

Forms part of the ribosomal stalk which helps the ribosome interact with GTP-bound translation factors. The protein is Large ribosomal subunit protein uL11 of Desulforudis audaxviator (strain MP104C).